Consider the following 355-residue polypeptide: MWNKNRLTQMLSIEYPIIQAGMAGSTTPKLVASVSNSGGLGTIGAGYFNTQQLEDEIDYVRQLTSNSFGVNVFVPSQQSYTSSQIENMNAWLKPYRRALHLEEPVVKIIEEQQFKCHIDTIIKKQVPVCCFTFGIPNESIIERLKEANIKLIGTATSVDEAIANEKAGMDAIVAQGSEAGGHRGSFLKPKNQLPMVGTISLVPQIVDVVSIPVIAAGGIMDGRGVLASIVLGAEGVQMGTAFLTSQDSNASELLRDAIINSKETDTVVTKAFSGKLARGINNRFIEEMSQYEGDIPDYPIQNELTSSIRKAAANIGDKELTHMWSGQSPRLATTHPANTIMSNIINQINQIMQYK.

Residues N71, Q175, G180, G218, and 237 to 240 (QMGT) contribute to the FMN site.

This sequence belongs to the nitronate monooxygenase family. NMO class I subfamily. FMN serves as cofactor.

It catalyses the reaction 3 propionate 3-nitronate + 3 O2 + H2O = 3 3-oxopropanoate + 2 nitrate + nitrite + H2O2 + 3 H(+). Its function is as follows. Nitronate monooxygenase that uses molecular oxygen to catalyze the oxidative denitrification of alkyl nitronates. Acts on propionate 3-nitronate (P3N), the presumed physiological substrate. Probably functions in the detoxification of P3N, a metabolic poison produced by plants and fungi as a defense mechanism. This Staphylococcus aureus (strain JH1) protein is Probable nitronate monooxygenase.